The chain runs to 541 residues: 2-succinyl-5-enolpyruvyl-6-hydroxy-3-cyclohexene-1-carboxylate synthase (541 aa).

Belongs to the TPP enzyme family. MenD subfamily. In terms of assembly, homodimer. Requires Mg(2+) as cofactor. Mn(2+) is required as a cofactor. Thiamine diphosphate serves as cofactor.

The catalysed reaction is isochorismate + 2-oxoglutarate + H(+) = 5-enolpyruvoyl-6-hydroxy-2-succinyl-cyclohex-3-ene-1-carboxylate + CO2. Its pathway is quinol/quinone metabolism; 1,4-dihydroxy-2-naphthoate biosynthesis; 1,4-dihydroxy-2-naphthoate from chorismate: step 2/7. It functions in the pathway quinol/quinone metabolism; menaquinone biosynthesis. Catalyzes the thiamine diphosphate-dependent decarboxylation of 2-oxoglutarate and the subsequent addition of the resulting succinic semialdehyde-thiamine pyrophosphate anion to isochorismate to yield 2-succinyl-5-enolpyruvyl-6-hydroxy-3-cyclohexene-1-carboxylate (SEPHCHC). The protein is 2-succinyl-5-enolpyruvyl-6-hydroxy-3-cyclohexene-1-carboxylate synthase of Rhodococcus jostii (strain RHA1).